The chain runs to 2352 residues: Cell wall alpha-1,3-glucan synthase mok12 (2352 aa).

A disordered region spans residues 1786–1813 (SNDFGIREVPLSDANQSSQADSTSIDRY). A compositionally biased stretch (polar residues) spans 1798-1813 (DANQSSQADSTSIDRY).

This sequence belongs to the glycosyltransferase group 1 family.

It catalyses the reaction [(1-&gt;3)-alpha-D-glucosyl](n) + UDP-alpha-D-glucose = [(1-&gt;3)-alpha-D-glucosyl](n+1) + UDP + H(+). The protein is Cell wall alpha-1,3-glucan synthase mok12 (mok12) of Schizosaccharomyces pombe (strain 972 / ATCC 24843) (Fission yeast).